Consider the following 251-residue polypeptide: Phosphate import ATP-binding protein PstB 2 (251 aa).

Residues 5-246 (ITTKDVHLYY…PDKEQTADYL (242 aa)) enclose the ABC transporter domain. An ATP-binding site is contributed by 37 to 44 (GPSGCGKS).

Belongs to the ABC transporter superfamily. Phosphate importer (TC 3.A.1.7) family. The complex is composed of two ATP-binding proteins (PstB), two transmembrane proteins (PstC and PstA) and a solute-binding protein (PstS).

It localises to the cell membrane. It carries out the reaction phosphate(out) + ATP + H2O = ADP + 2 phosphate(in) + H(+). Functionally, part of the ABC transporter complex PstSACB involved in phosphate import. Responsible for energy coupling to the transport system. The polypeptide is Phosphate import ATP-binding protein PstB 2 (Ligilactobacillus salivarius (strain UCC118) (Lactobacillus salivarius)).